A 359-amino-acid polypeptide reads, in one-letter code: Homoserine dehydrogenase (359 aa).

NAD(+) contacts are provided by Ala13, Val15, Val16, and Ala41. An NADP(+)-binding site is contributed by Val16. Val16 is a binding site for NADPH. Positions 60, 93, 94, and 117 each coordinate NADPH. Thr93 contacts NAD(+). Residue Thr93 coordinates NADP(+). Lys117 is an NADP(+) binding site. Residues Glu143, Val146, Ala148, and Leu150 each contribute to the Na(+) site. Residues Gly205 and Glu208 each contribute to the NADP(+) site. Residues Glu208 and Asp219 each contribute to the L-homoserine site. The Proton donor role is filled by Lys223. Lys290 is covalently cross-linked (Glycyl lysine isopeptide (Lys-Gly) (interchain with G-Cter in ubiquitin)). Gly340 is a binding site for NAD(+). Gly340 contributes to the NADP(+) binding site. Gly340 serves as a coordination point for NADPH.

It belongs to the homoserine dehydrogenase family. As to quaternary structure, homodimer. A metal cation is required as a cofactor.

The catalysed reaction is L-homoserine + NADP(+) = L-aspartate 4-semialdehyde + NADPH + H(+). It carries out the reaction L-homoserine + NAD(+) = L-aspartate 4-semialdehyde + NADH + H(+). It participates in amino-acid biosynthesis; L-methionine biosynthesis via de novo pathway; L-homoserine from L-aspartate: step 3/3. Its pathway is amino-acid biosynthesis; L-threonine biosynthesis; L-threonine from L-aspartate: step 3/5. In terms of biological role, catalyzes the conversion of L-aspartate-beta-semialdehyde (L-Asa) to L-homoserine (L-Hse), the third step in the biosynthesis of amino acids that derive from aspartate (the aspartate family of amino acids), including methioinine and threonine, the latter of which is a precursor to isoleucine; production of homoserine leads to a branch-point in the pathway as it can either be O-phosphorylated for processing to threonine, or O-acylated for processing to methionine. This Saccharomyces cerevisiae (strain ATCC 204508 / S288c) (Baker's yeast) protein is Homoserine dehydrogenase (HOM6).